A 348-amino-acid chain; its full sequence is Uroporphyrinogen decarboxylase (348 aa).

Residues 27–31, phenylalanine 46, aspartate 76, tyrosine 152, serine 207, and histidine 320 each bind substrate; that span reads RQAGR.

This sequence belongs to the uroporphyrinogen decarboxylase family. In terms of assembly, homodimer.

It localises to the cytoplasm. The catalysed reaction is uroporphyrinogen III + 4 H(+) = coproporphyrinogen III + 4 CO2. It functions in the pathway porphyrin-containing compound metabolism; protoporphyrin-IX biosynthesis; coproporphyrinogen-III from 5-aminolevulinate: step 4/4. Catalyzes the decarboxylation of four acetate groups of uroporphyrinogen-III to yield coproporphyrinogen-III. The chain is Uroporphyrinogen decarboxylase from Bacillus mycoides (strain KBAB4) (Bacillus weihenstephanensis).